We begin with the raw amino-acid sequence, 309 residues long: Ribonuclease Z (309 aa).

Zn(2+)-binding residues include His-63, His-65, Asp-67, His-68, His-141, Asp-212, and His-270. The active-site Proton acceptor is Asp-67.

This sequence belongs to the RNase Z family. As to quaternary structure, homodimer. It depends on Zn(2+) as a cofactor.

The enzyme catalyses Endonucleolytic cleavage of RNA, removing extra 3' nucleotides from tRNA precursor, generating 3' termini of tRNAs. A 3'-hydroxy group is left at the tRNA terminus and a 5'-phosphoryl group is left at the trailer molecule.. In terms of biological role, zinc phosphodiesterase, which displays some tRNA 3'-processing endonuclease activity. Probably involved in tRNA maturation, by removing a 3'-trailer from precursor tRNA. In Lactobacillus delbrueckii subsp. bulgaricus (strain ATCC 11842 / DSM 20081 / BCRC 10696 / JCM 1002 / NBRC 13953 / NCIMB 11778 / NCTC 12712 / WDCM 00102 / Lb 14), this protein is Ribonuclease Z.